Consider the following 104-residue polypeptide: Acetylcholine receptor subunit alpha (104 aa).

The Extracellular segment spans residues 1 to 104; it reads NPPAIFKSYC…YFIVNVIIPC (104 aa). Intrachain disulfides connect Cys10/Cys24 and Cys74/Cys75. Asn23 is a glycosylation site (N-linked (GlcNAc...) asparagine).

It belongs to the ligand-gated ion channel (TC 1.A.9) family. Acetylcholine receptor (TC 1.A.9.1) subfamily. Alpha-1/CHRNA1 sub-subfamily. As to quaternary structure, one of the alpha chains that assemble within the acetylcholine receptor, a pentamer of two alpha chains, a beta, a delta, and a gamma or epsilon chains.

It localises to the postsynaptic cell membrane. The protein localises to the cell membrane. The enzyme catalyses K(+)(in) = K(+)(out). It carries out the reaction Na(+)(in) = Na(+)(out). Functionally, upon acetylcholine binding, the AChR responds by an extensive change in conformation that affects all subunits and leads to opening of an ion-conducting channel across the plasma membrane. The polypeptide is Acetylcholine receptor subunit alpha (CHRNA1) (Naja naja (Indian cobra)).